A 262-amino-acid chain; its full sequence is Hemin import ATP-binding protein HmuV (262 aa).

One can recognise an ABC transporter domain in the interval Leu-5 to Glu-242. Gly-37 to Ser-44 contacts ATP.

Belongs to the ABC transporter superfamily. Heme (hemin) importer (TC 3.A.1.14.5) family. The complex is composed of two ATP-binding proteins (HmuV), two transmembrane proteins (HmuU) and a solute-binding protein (HmuT).

The protein resides in the cell inner membrane. Part of the ABC transporter complex HmuTUV involved in hemin import. Responsible for energy coupling to the transport system. The polypeptide is Hemin import ATP-binding protein HmuV (Rhodopseudomonas palustris (strain HaA2)).